An 82-amino-acid chain; its full sequence is RNA-binding protein Hfq (82 aa).

One can recognise a Sm domain in the interval 11–71 (DTFLNHVRKT…ISTIMPGAPI (61 aa)).

The protein belongs to the Hfq family. Homohexamer.

In terms of biological role, RNA chaperone that binds small regulatory RNA (sRNAs) and mRNAs to facilitate mRNA translational regulation in response to envelope stress, environmental stress and changes in metabolite concentrations. Also binds with high specificity to tRNAs. This is RNA-binding protein Hfq from Rhodopseudomonas palustris (strain BisA53).